We begin with the raw amino-acid sequence, 293 residues long: 4-diphosphocytidyl-2-C-methyl-D-erythritol kinase (293 aa).

Residue Lys-16 is part of the active site. ATP is bound at residue 99–109; the sequence is PMGAGLGGGSS. Residue Asp-141 is part of the active site.

Belongs to the GHMP kinase family. IspE subfamily.

It catalyses the reaction 4-CDP-2-C-methyl-D-erythritol + ATP = 4-CDP-2-C-methyl-D-erythritol 2-phosphate + ADP + H(+). The protein operates within isoprenoid biosynthesis; isopentenyl diphosphate biosynthesis via DXP pathway; isopentenyl diphosphate from 1-deoxy-D-xylulose 5-phosphate: step 3/6. Catalyzes the phosphorylation of the position 2 hydroxy group of 4-diphosphocytidyl-2C-methyl-D-erythritol. In Burkholderia multivorans (strain ATCC 17616 / 249), this protein is 4-diphosphocytidyl-2-C-methyl-D-erythritol kinase.